Consider the following 306-residue polypeptide: Glutathione transport system permease protein GsiC (306 aa).

Residues 1–8 (MLNYVLKR) are Cytoplasmic-facing. A helical membrane pass occupies residues 9-29 (LLGLIPTLLIVAVLVFLFVHL). At 30 to 102 (LPGDPARLIA…SRFLPTLWLT (73 aa)) the chain is on the periplasmic side. The ABC transmembrane type-1 domain maps to 95 to 292 (FLPTLWLTIT…LEFILINLVV (198 aa)). Residues 103–123 (ITSMIWAVLFGMAIGIAAAVW) form a helical membrane-spanning segment. The Cytoplasmic portion of the chain corresponds to 124-134 (RNRWPDRLGMT). Residues 135–155 (LAVTGISFPAFALGMLLMQIF) traverse the membrane as a helical segment. Over 156 to 168 (SVDLGWLPTVGAD) the chain is Periplasmic. Residues 169–189 (SWQHYILPSLTLGAAVASVMA) form a helical membrane-spanning segment. The Cytoplasmic segment spans residues 190–228 (RFTRSSFVDVLSEDYMRTARAKGVSETWVVLKHGLRNAM). The helical transmembrane segment at 229–249 (IPVVTMMGLQFGFLLGGSIVV) threads the bilayer. The Periplasmic segment spans residues 250–278 (EKVFNWPGLGRLLVDSVDMRDYPVIQAEV). A helical transmembrane segment spans residues 279-299 (LLFSLEFILINLVVDVLYAAI). The Cytoplasmic segment spans residues 300-306 (NPAIRYK).

The protein belongs to the binding-protein-dependent transport system permease family. In terms of assembly, the complex is composed of two ATP-binding proteins (GsiA), two transmembrane proteins (GsiC and GsiD) and a solute-binding protein (GsiB).

It is found in the cell inner membrane. Functionally, part of the ABC transporter complex GsiABCD involved in glutathione import. Probably responsible for the translocation of the substrate across the membrane. The chain is Glutathione transport system permease protein GsiC from Salmonella typhimurium (strain LT2 / SGSC1412 / ATCC 700720).